The following is a 761-amino-acid chain: Elongation factor G, mitochondrial (761 aa).

The transit peptide at 1–42 directs the protein to the mitochondrion; it reads MSVQKMMRVPRKMVGGRIPFFTCSKVFSGFSRRSFHESPLAR. Positions 68 to 349 constitute a tr-type G domain; sequence NKLRNIGISA…AIVDYLPNPS (282 aa). Residues 77 to 84, 148 to 152, and 202 to 205 each bind GTP; these read AHIDSGKT, DTPGH, and NKMD.

It belongs to the TRAFAC class translation factor GTPase superfamily. Classic translation factor GTPase family. EF-G/EF-2 subfamily. In terms of processing, the precursor is processed in two steps involving mitochondrial intermediate peptidase (MIP) and mitochondrial processing peptidase (MPP).

It localises to the mitochondrion. The protein operates within protein biosynthesis; polypeptide chain elongation. Mitochondrial GTPase that catalyzes the GTP-dependent ribosomal translocation step during translation elongation. During this step, the ribosome changes from the pre-translocational (PRE) to the post-translocational (POST) state as the newly formed A-site-bound peptidyl-tRNA and P-site-bound deacylated tRNA move to the P and E sites, respectively. Catalyzes the coordinated movement of the two tRNA molecules, the mRNA and conformational changes in the ribosome. The polypeptide is Elongation factor G, mitochondrial (Saccharomyces cerevisiae (strain YJM789) (Baker's yeast)).